A 275-amino-acid chain; its full sequence is Large ribosomal subunit protein uL2 (275 aa).

A disordered region spans residues 222-275; the sequence is GVAMNPVDHPHGGGEGRNKGRHPTSPWGQKSKGLKTRHNKRTDNMIIRRRAKKK. A compositionally biased stretch (basic and acidic residues) spans 229-239; the sequence is DHPHGGGEGRN.

The protein belongs to the universal ribosomal protein uL2 family. In terms of assembly, part of the 50S ribosomal subunit. Forms a bridge to the 30S subunit in the 70S ribosome.

In terms of biological role, one of the primary rRNA binding proteins. Required for association of the 30S and 50S subunits to form the 70S ribosome, for tRNA binding and peptide bond formation. It has been suggested to have peptidyltransferase activity; this is somewhat controversial. Makes several contacts with the 16S rRNA in the 70S ribosome. This Psychrobacter cryohalolentis (strain ATCC BAA-1226 / DSM 17306 / VKM B-2378 / K5) protein is Large ribosomal subunit protein uL2.